A 424-amino-acid polypeptide reads, in one-letter code: Microcin H47 secretion protein MchE (424 aa).

The Cytoplasmic segment spans residues 1 to 25 (MFRQDALENRKMKWQGRAILLPGIP). The chain crosses the membrane as a helical span at residues 26 to 46 (LWLIMLGSIVFITAFLMFIIV). Residues 47 to 424 (GTYSRRVNVS…KHSATGPLND (378 aa)) lie on the Periplasmic side of the membrane.

This sequence belongs to the membrane fusion protein (MFP) (TC 8.A.1) family.

It localises to the cell inner membrane. Its function is as follows. Probably involved, in conjunction with MchF, in the secretion of microcin H47. This is Microcin H47 secretion protein MchE (mchE) from Escherichia coli.